The chain runs to 298 residues: 1D-myo-inositol 2-acetamido-2-deoxy-alpha-D-glucopyranoside deacetylase (298 aa).

His-14, Asp-17, and His-148 together coordinate Zn(2+). Residues 277–298 (RGPAGPDGREHDLFAGLDGPAT) are disordered.

It belongs to the MshB deacetylase family. It depends on Zn(2+) as a cofactor.

The catalysed reaction is 1D-myo-inositol 2-acetamido-2-deoxy-alpha-D-glucopyranoside + H2O = 1D-myo-inositol 2-amino-2-deoxy-alpha-D-glucopyranoside + acetate. Catalyzes the deacetylation of 1D-myo-inositol 2-acetamido-2-deoxy-alpha-D-glucopyranoside (GlcNAc-Ins) in the mycothiol biosynthesis pathway. The polypeptide is 1D-myo-inositol 2-acetamido-2-deoxy-alpha-D-glucopyranoside deacetylase (Nocardia farcinica (strain IFM 10152)).